Consider the following 767-residue polypeptide: RNA cytosine C(5)-methyltransferase NSUN2 (767 aa).

The tract at residues 1 to 36 is disordered; it reads MGRRSRGRRLQQQQRPEDAEDGAEGGGKRGEAGWEG. Residue K46 forms a Glycyl lysine isopeptide (Lys-Gly) (interchain with G-Cter in SUMO2) linkage. Position 139 is a phosphoserine; by AURKB (S139). Residues 184 to 190, D215, D242, and D268 contribute to the S-adenosyl-L-methionine site; that span reads CAAPGSK. The active-site Nucleophile is the C321. Residues 436–481 are disordered; that stretch reads NKRQPKLQGKSAETRESTQLSPADLTEGKPTDPSKLESPSFTGTGD. S456 carries the post-translational modification Phosphoserine. Positions 461–470 are enriched in basic and acidic residues; the sequence is TEGKPTDPSK. Glycyl lysine isopeptide (Lys-Gly) (interchain with G-Cter in SUMO2) cross-links involve residues K464 and K470. Phosphoserine is present on S473. Glycyl lysine isopeptide (Lys-Gly) (interchain with G-Cter in SUMO2) cross-links involve residues K511 and K516. K586 is modified (N6-acetyllysine; alternate). N6-malonyllysine; alternate is present on K586. A Glycyl lysine isopeptide (Lys-Gly) (interchain with G-Cter in SUMO2); alternate cross-link involves residue K586. S593 carries the phosphoserine modification. Residues K640, K654, and K660 each participate in a glycyl lysine isopeptide (Lys-Gly) (interchain with G-Cter in SUMO2) cross-link. Position 718 is a phosphothreonine (T718). Residues 719-730 show a composition bias toward polar residues; the sequence is NESAASTGQPDN. Positions 719–767 are disordered; that stretch reads NESAASTGQPDNDVTEGQRAGEPNSPDAEEANSPDVTAGCDPAGVHPPR. Phosphoserine occurs at positions 724, 743, and 751.

The protein belongs to the class I-like SAM-binding methyltransferase superfamily. RsmB/NOP family. TRM4 subfamily. Interacts with NPM1 and NCL during interphase; interaction is disrupted following phosphorylation at Ser-139. In terms of processing, phosphorylated at Ser-139 by AURKB during mitosis, leading to abolish methyltransferase activity and the interaction with NPM1. In terms of tissue distribution, expressed in adult and fetal brain and in lymphoblastoid cells.

Its subcellular location is the nucleus. The protein resides in the nucleolus. It is found in the cytoplasm. The protein localises to the mitochondrion. It localises to the cytoskeleton. Its subcellular location is the spindle. The protein resides in the secreted. It is found in the extracellular exosome. It catalyses the reaction cytidine(48) in tRNA + S-adenosyl-L-methionine = 5-methylcytidine(48) in tRNA + S-adenosyl-L-homocysteine + H(+). It carries out the reaction cytidine(49) in tRNA + S-adenosyl-L-methionine = 5-methylcytidine(49) in tRNA + S-adenosyl-L-homocysteine + H(+). The catalysed reaction is cytidine(50) in tRNA + S-adenosyl-L-methionine = 5-methylcytidine(50) in tRNA + S-adenosyl-L-homocysteine + H(+). The enzyme catalyses cytidine(34) in tRNA precursor + S-adenosyl-L-methionine = 5-methylcytidine(34) in tRNA precursor + S-adenosyl-L-homocysteine + H(+). It catalyses the reaction a cytidine in mRNA + S-adenosyl-L-methionine = a 5-methylcytidine in mRNA + S-adenosyl-L-homocysteine + H(+). Inhibited by magnesium ions. Its function is as follows. RNA cytosine C(5)-methyltransferase that methylates cytosine to 5-methylcytosine (m5C) in various RNAs, such as tRNAs, mRNAs and some long non-coding RNAs (lncRNAs). Involved in various processes, such as epidermal stem cell differentiation, testis differentiation and maternal to zygotic transition during early development: acts by increasing protein synthesis; cytosine C(5)-methylation promoting tRNA stability and preventing mRNA decay. Methylates cytosine to 5-methylcytosine (m5C) at positions 34 and 48 of intron-containing tRNA(Leu)(CAA) precursors, and at positions 48, 49 and 50 of tRNA(Gly)(GCC) precursors. tRNA methylation is required generation of RNA fragments derived from tRNAs (tRFs). Also mediates C(5)-methylation of mitochondrial tRNAs. Catalyzes cytosine C(5)-methylation of mRNAs, leading to stabilize them and prevent mRNA decay: mRNA stabilization involves YBX1 that specifically recognizes and binds m5C-modified transcripts. Cytosine C(5)-methylation of mRNAs also regulates mRNA export: methylated transcripts are specifically recognized by THOC4/ALYREF, which mediates mRNA nucleo-cytoplasmic shuttling. Also mediates cytosine C(5)-methylation of non-coding RNAs, such as vault RNAs (vtRNAs), promoting their processing into regulatory small RNAs. Cytosine C(5)-methylation of vtRNA VTRNA1.1 promotes its processing into small-vault RNA4 (svRNA4) and regulates epidermal differentiation. May act downstream of Myc to regulate epidermal cell growth and proliferation. Required for proper spindle assembly and chromosome segregation, independently of its methyltransferase activity. This chain is RNA cytosine C(5)-methyltransferase NSUN2, found in Homo sapiens (Human).